We begin with the raw amino-acid sequence, 82 residues long: ATP synthase subunit c, chloroplastic (82 aa).

A run of 2 helical transmembrane segments spans residues 3-23 (PIVA…AAIG) and 57-77 (FAFM…LLFA).

It belongs to the ATPase C chain family. As to quaternary structure, F-type ATPases have 2 components, F(1) - the catalytic core - and F(0) - the membrane proton channel. F(1) has five subunits: alpha(3), beta(3), gamma(1), delta(1), epsilon(1). F(0) has four main subunits: a(1), b(1), b'(1) and c(10-14). The alpha and beta chains form an alternating ring which encloses part of the gamma chain. F(1) is attached to F(0) by a central stalk formed by the gamma and epsilon chains, while a peripheral stalk is formed by the delta, b and b' chains.

It localises to the plastid. Its subcellular location is the chloroplast thylakoid membrane. Its function is as follows. F(1)F(0) ATP synthase produces ATP from ADP in the presence of a proton or sodium gradient. F-type ATPases consist of two structural domains, F(1) containing the extramembraneous catalytic core and F(0) containing the membrane proton channel, linked together by a central stalk and a peripheral stalk. During catalysis, ATP synthesis in the catalytic domain of F(1) is coupled via a rotary mechanism of the central stalk subunits to proton translocation. In terms of biological role, key component of the F(0) channel; it plays a direct role in translocation across the membrane. A homomeric c-ring of between 10-14 subunits forms the central stalk rotor element with the F(1) delta and epsilon subunits. The protein is ATP synthase subunit c, chloroplastic of Tetradesmus obliquus (Green alga).